Reading from the N-terminus, the 55-residue chain is Lantibiotic nisin-U (55 aa).

Positions 1 to 24 are excised as a propeptide; it reads MNNEDFNLDLIKISKENNSGASPR. T26 carries the post-translational modification 2,3-didehydrobutyrine. Residues 27–31 constitute a cross-link (lanthionine (Ser-Cys)); the sequence is SKSLC. S29 bears the 2,3-didehydroalanine (Ser) mark. Cross-links (beta-methyllanthionine (Thr-Cys)) lie at residues 32 to 35, 37 to 43, 47 to 50, and 49 to 52; these read TPGC, TGILMTC, TATC, and TCGC. T42 carries the 2,3-didehydrobutyrine modification.

Maturation of lantibiotics involves the enzymatic conversion of Thr, and Ser into dehydrated AA and the formation of thioether bonds with cysteine. This is followed by membrane translocation and cleavage of the modified precursor.

It localises to the secreted. Its function is as follows. Lanthionine-containing peptide antibiotic (lantibiotic) active on Gram-positive bacteria. The bactericidal activity of lantibiotics is based on depolarization of energized bacterial cytoplasmic membranes, initiated by the formation of aqueous transmembrane pores. The chain is Lantibiotic nisin-U (nsuA) from Streptococcus uberis.